The chain runs to 102 residues: uncharacterized protein (102 aa).

Positions 1 to 19 are cleaved as a signal peptide; the sequence is MFLFCFVLFCSLVFPLARG.

This is an uncharacterized protein from Saccharomyces cerevisiae (strain ATCC 204508 / S288c) (Baker's yeast).